A 1028-amino-acid chain; its full sequence is Beta-galactosidase (1028 aa).

Substrate-binding residues include Asn-104 and Asp-203. Asp-203 is a Na(+) binding site. The Mg(2+) site is built by Glu-418, His-420, and Glu-463. Residues Glu-463 and 539-542 contribute to the substrate site; that span reads EYAH. The active-site Proton donor is the Glu-463. The Nucleophile role is filled by Glu-539. Mg(2+) is bound at residue Asn-599. Residues Phe-603 and Asn-606 each contribute to the Na(+) site. Substrate-binding residues include Asn-606 and Trp-1004.

The protein belongs to the glycosyl hydrolase 2 family. In terms of assembly, homotetramer. It depends on Mg(2+) as a cofactor. Na(+) is required as a cofactor.

The enzyme catalyses Hydrolysis of terminal non-reducing beta-D-galactose residues in beta-D-galactosides.. This chain is Beta-galactosidase, found in Enterobacter sp. (strain 638).